A 117-amino-acid polypeptide reads, in one-letter code: MRVKRGLAAHRRHKKYLDMAKGYRGGRSRLYRTAREAVERSLCYAFRDRKVKKREFRKLWILRINAAARLNGLSYSKFMHGLTLAGVELNRKVLADLAVREKDDFAKIAELAKSKLN.

Belongs to the bacterial ribosomal protein bL20 family.

Binds directly to 23S ribosomal RNA and is necessary for the in vitro assembly process of the 50S ribosomal subunit. It is not involved in the protein synthesizing functions of that subunit. The protein is Large ribosomal subunit protein bL20 of Nitratidesulfovibrio vulgaris (strain DP4) (Desulfovibrio vulgaris).